The chain runs to 295 residues: Acetylglutamate kinase (295 aa).

Substrate-binding positions include Gly61–Gly62, Arg83, and Asn187.

The protein belongs to the acetylglutamate kinase family. ArgB subfamily.

It localises to the cytoplasm. It carries out the reaction N-acetyl-L-glutamate + ATP = N-acetyl-L-glutamyl 5-phosphate + ADP. The protein operates within amino-acid biosynthesis; L-arginine biosynthesis; N(2)-acetyl-L-ornithine from L-glutamate: step 2/4. Functionally, catalyzes the ATP-dependent phosphorylation of N-acetyl-L-glutamate. The sequence is that of Acetylglutamate kinase from Methanocorpusculum labreanum (strain ATCC 43576 / DSM 4855 / Z).